A 375-amino-acid chain; its full sequence is MSNTIAYFDITIANEPAGRLTFELFDDVVPKTANNFKHLCIGDKTNEAGVKLAYAGSSFHRCIKGFMLQGGDFTRGDGTGGESIYGEKFEDENFELKHDKPMLLSMANAGPGTNGSQFFITTVPTPHLDGKHVVFGRVIYNRSLVRRIENIPTTSDRPDQAVTISSAGVLSPDEFAQLEAERQAKQAGSDGGDIWEDWPQDEEGVDAEKPEEALVVAGKLKEVGTKEFKAGNFAVALDKYQKALRYLDVHPVLPNDSPAELVESFRSLRLPLLTNAALCALKLPASPNTSSLVVSLTSRALTLPNLSASEKGKALYRRAQAYVLKKDDEAAEKDLKGALECVPGDAGVIKLLKDVEAKRKARREKERQAFAKMFG.

Positions 7 to 169 (YFDITIANEP…QAVTISSAGV (163 aa)) constitute a PPIase cyclophilin-type domain. TPR repeat units follow at residues 217–250 (AGKLKEVGTKEFKAGNFAVALDKYQKALRYLDVH), 270–307 (LPLLTNAALCALKLPASPNTSSLVVSLTSRALTLPNLS), and 312–345 (GKALYRRAQAYVLKKDDEAAEKDLKGALECVPGD).

This sequence belongs to the cyclophilin-type PPIase family. PPIase D subfamily.

The protein localises to the cytoplasm. It catalyses the reaction [protein]-peptidylproline (omega=180) = [protein]-peptidylproline (omega=0). In terms of biological role, PPIases accelerate the folding of proteins. It catalyzes the cis-trans isomerization of proline imidic peptide bonds in oligopeptides. In Cryptococcus neoformans var. neoformans serotype D (strain JEC21 / ATCC MYA-565) (Filobasidiella neoformans), this protein is Peptidyl-prolyl cis-trans isomerase D (CPR6).